A 926-amino-acid chain; its full sequence is MADPGKGRGRSLALLQALKKSQMMDSPSQSESQSPESTPEQSTAPSTIASATPSTSGVSIGGRGRAAALMLAKMQQKPGSTTPAIFVPPSSTSAPTAGTGRGFKLLQNLQASQKASSQIASSQVTSSAQSDIKDLTEKMSETSVSAQASSVAKNKYFREVKDTPPVVKKGETGVPIEVTCNYIYLNFKENIVFEYEVKFEPDQDYKHLRFKLLNEHIEHFKEKTFDGTTLYVPHELPDAVRNLVSTNPYDQSKVNVSIIFRRTRRLSEMIHIYNVMFKCIMKDLKLIRFGRQHYNEHAAIQIPQHKLEVWPGYVTAVDEYEGGLMLTLDSTHRVLRTQTVLSLIKEVVQTEGANWKRKMTDILIGASVMTTYNKKLFRVDTIDDKMSPRSTFEKTEKGETVQISFIDYYKKNYGIEIMDWDQPLLISRDTKRMPGSDTPTDFMICLIPELCQLTGLTDDQRSNFRLMKDVATYTRITPNQRHAAFKKYIESVMKNETAKSRLAGWGLSIAPETVNLTARTLPPETLYFGDNVRVPGKPNAEWNSEVTKHSVMQAVDIMRWVLLFTQRDKQVAMDFLSTLKRNCRPMGIMVSDAELVPLANDRTDTYVLALKKCITSSVQLVVAICSTKRDDRYAAIKKVCCADNPVPSQVINARTLMNTNKIRSITQKILLQLNCKLGGTLWSISIPFKSAMIVGIDSYHDPSRRNRSVCSFVASYNQSMTLWYSKVIFQEKGQEIVDGLKCCLVDALTHYLRSNGQLPDRIIIYRDGVGDGQLKLLQQYEIPQMKICFTILGSNYQPTLTYVVVQKRINTRIFLKSRDGYDNPNPGTVVDHCITRRDWYDFLIVSQKVTQGTVTPTHYVVVYDDSGITPDQCQRLTYKMCHLYYNWPGTVRVPAPCQYAHKLSYLVGQCVHAQPSDVLVDKLFFL.

The tract at residues 1–62 (MADPGKGRGR…PSTSGVSIGG (62 aa)) is disordered. Residues 26 to 56 (SPSQSESQSPESTPEQSTAPSTIASATPSTS) are compositionally biased toward low complexity. A PAZ domain is found at 339–455 (TVLSLIKEVV…LIPELCQLTG (117 aa)). The Piwi domain maps to 620–912 (LVVAICSTKR…LSYLVGQCVH (293 aa)). Residue glutamine 672 participates in Mg(2+) binding. Catalysis depends on residues aspartate 697, glutamate 735, aspartate 767, and histidine 901. Mg(2+) is bound at residue leucine 926.

Belongs to the argonaute family. Piwi subfamily. As to quaternary structure, interacts (when symmetrically methylated) with Papi/TDRKH. Interacts with Vasa. Requires Mg(2+) as cofactor. Arginine methylation is required for the interaction with Tudor domain-containing protein Papi/TDRKH. In terms of tissue distribution, highly expressed in the larval testis, pupal ovary and adult eggs.

It is found in the cytoplasm. In terms of biological role, endoribonuclease that plays a central role during spermatogenesis by repressing transposable elements and preventing their mobilization, which is essential for the germline integrity. Plays an essential role in meiotic differentiation of spermatocytes, germ cell differentiation and in self-renewal of spermatogonial stem cells. Its presence in oocytes suggests that it may participate in similar functions during oogenesis in females. Acts via the piRNA metabolic process, which mediates the repression of transposable elements during meiosis by forming complexes composed of piRNAs and Piwi proteins and govern the methylation and subsequent repression of transposons. Directly binds piRNAs, a class of 24 to 30 nucleotide RNAs that are generated by a Dicer-independent mechanism and are primarily derived from transposons and other repeated sequence elements. Strongly prefers a have adenine at position 10 of their guide (g10A preference). Plays a key role in the piRNA amplification loop, also named ping-pong amplification cycle: antisense piRNA-bound Siwi and sense piRNA-bound Ago3 reciprocally cleave complementary transcripts, to couple the amplification of piRNAs with the repression of transposable elements. The protein is Piwi-like protein Ago3 (AGO3) of Bombyx mori (Silk moth).